We begin with the raw amino-acid sequence, 249 residues long: Probable transcriptional regulatory protein ACIAD2052 (249 aa).

Belongs to the TACO1 family.

It is found in the cytoplasm. The polypeptide is Probable transcriptional regulatory protein ACIAD2052 (Acinetobacter baylyi (strain ATCC 33305 / BD413 / ADP1)).